We begin with the raw amino-acid sequence, 323 residues long: MIRSVVRGIGSALPKRVMKNTDFEGIVETSDEWIVQRTGIRERHIAGEGETTVSLGAAAARAAIENAGLQPSDIDLVLLATSTPNNTFPASAVAIQRELGITRGFAFDLQAVCSGFIYAITTADLYIRGGMARRVLVIGAETFSRILDWTDRTTCVLFGDGAGAIVLEAAEGHGLTSDRGILAANLRSDGNHKEKLYVDGGPSTTQTVGHLRMEGREVFKHAVGMITDVIEASFEATGLTAEDIDWFVPHQANKRIIDASAKKLHIAEEKVVITVDRHGNTSAASVPLALATAVADGRIKKGDLVLLEAMGGGFTWGAVLVRW.

Active-site residues include C113 and H250. Residues 251-255 form an ACP-binding region; that stretch reads QANKR. N280 is a catalytic residue.

The protein belongs to the thiolase-like superfamily. FabH family. As to quaternary structure, homodimer.

The protein localises to the cytoplasm. The enzyme catalyses malonyl-[ACP] + acetyl-CoA + H(+) = 3-oxobutanoyl-[ACP] + CO2 + CoA. Its pathway is lipid metabolism; fatty acid biosynthesis. Functionally, catalyzes the condensation reaction of fatty acid synthesis by the addition to an acyl acceptor of two carbons from malonyl-ACP. Catalyzes the first condensation reaction which initiates fatty acid synthesis and may therefore play a role in governing the total rate of fatty acid production. Possesses both acetoacetyl-ACP synthase and acetyl transacylase activities. Its substrate specificity determines the biosynthesis of branched-chain and/or straight-chain of fatty acids. In Brucella abortus biovar 1 (strain 9-941), this protein is Beta-ketoacyl-[acyl-carrier-protein] synthase III.